The following is a 249-amino-acid chain: RNA polymerase sigma factor SigI3 (249 aa).

The short motif at 60–73 is the Polymerase core binding element; that stretch reads EEFSIGLAAFNEAI. The H-T-H motif DNA-binding region spans 199–218; sequence MKEVLSRIKVNHKTIQRNRK.

This sequence belongs to the sigma-70 factor family. SigI subfamily. In terms of assembly, interacts with RsgI3.

The protein resides in the cytoplasm. With respect to regulation, negatively regulated by the anti-sigma-I factor RsgI3. Binding of the polysaccharide substrate to RsgI3 may lead to the release and activation of SigI3. Functionally, sigma factors are initiation factors that promote the attachment of RNA polymerase to specific initiation sites and are then released. This sigma factor is involved in regulation of cellulosomal genes via an external polysaccharide-sensing mechanism. Recognizes the predicted promoters associated with sigI3 itself, pl11, ce12 and cipA. The chain is RNA polymerase sigma factor SigI3 from Acetivibrio thermocellus (strain ATCC 27405 / DSM 1237 / JCM 9322 / NBRC 103400 / NCIMB 10682 / NRRL B-4536 / VPI 7372) (Clostridium thermocellum).